Reading from the N-terminus, the 147-residue chain is UPF0260 protein PMI1174 (147 aa).

The protein belongs to the UPF0260 family.

The protein is UPF0260 protein PMI1174 of Proteus mirabilis (strain HI4320).